We begin with the raw amino-acid sequence, 217 residues long: MEHSSWHALIKAQLPEGYFGKINQFMEQVYSQGIIYPPKEKVFQALLTTLLEEVKVVILGQDPYHGPGQAQGLSFSVPDSIPAPPSLQNILKELSDDIGVKKSHDLTAWAEQGVLLLNACLTVPAGQANGHAGQIWEPFTDAVIQVVNHLDRPVVFVLWGAYARKKKALVTNPHHLIIESAHPSPLSVYRGFWGSKPFSKANTFLKETGQEPIDWLR.

The active-site Proton acceptor is the Asp-62.

Belongs to the uracil-DNA glycosylase (UDG) superfamily. UNG family.

It is found in the cytoplasm. It catalyses the reaction Hydrolyzes single-stranded DNA or mismatched double-stranded DNA and polynucleotides, releasing free uracil.. Excises uracil residues from the DNA which can arise as a result of misincorporation of dUMP residues by DNA polymerase or due to deamination of cytosine. The chain is Uracil-DNA glycosylase from Streptococcus pneumoniae serotype 19F (strain G54).